The following is a 320-amino-acid chain: Ferrochelatase (320 aa).

Positions 194 and 275 each coordinate Fe cation.

Belongs to the ferrochelatase family.

The protein resides in the cytoplasm. The catalysed reaction is heme b + 2 H(+) = protoporphyrin IX + Fe(2+). It functions in the pathway porphyrin-containing compound metabolism; protoheme biosynthesis; protoheme from protoporphyrin-IX: step 1/1. Catalyzes the ferrous insertion into protoporphyrin IX. This chain is Ferrochelatase, found in Yersinia pestis bv. Antiqua (strain Antiqua).